The sequence spans 99 residues: Aspartyl/glutamyl-tRNA(Asn/Gln) amidotransferase subunit C (99 aa).

This sequence belongs to the GatC family. Heterotrimer of A, B and C subunits.

The catalysed reaction is L-glutamyl-tRNA(Gln) + L-glutamine + ATP + H2O = L-glutaminyl-tRNA(Gln) + L-glutamate + ADP + phosphate + H(+). It carries out the reaction L-aspartyl-tRNA(Asn) + L-glutamine + ATP + H2O = L-asparaginyl-tRNA(Asn) + L-glutamate + ADP + phosphate + 2 H(+). In terms of biological role, allows the formation of correctly charged Asn-tRNA(Asn) or Gln-tRNA(Gln) through the transamidation of misacylated Asp-tRNA(Asn) or Glu-tRNA(Gln) in organisms which lack either or both of asparaginyl-tRNA or glutaminyl-tRNA synthetases. The reaction takes place in the presence of glutamine and ATP through an activated phospho-Asp-tRNA(Asn) or phospho-Glu-tRNA(Gln). The protein is Aspartyl/glutamyl-tRNA(Asn/Gln) amidotransferase subunit C of Corynebacterium efficiens (strain DSM 44549 / YS-314 / AJ 12310 / JCM 11189 / NBRC 100395).